A 249-amino-acid polypeptide reads, in one-letter code: Tetrahydromethanopterin S-methyltransferase subunit A (249 aa).

At 1–227 the chain is on the cytoplasmic side; sequence MADKKEVIQN…KISSGYYAGK (227 aa). Residue histidine 84 participates in 5-hydroxybenzimidazolylcob(I)amide binding. The helical transmembrane segment at 228 to 248 threads the bilayer; that stretch reads IEGIVIGFILTLVFLIIIIQG. Position 249 (leucine 249) is a topological domain, extracellular.

The protein belongs to the MtrA family. As to quaternary structure, the complex is composed of 8 subunits; MtrA, MtrB, MtrC, MtrD, MtrE, MtrF, MtrG and MtrH. 5-hydroxybenzimidazolylcob(I)amide serves as cofactor.

The protein resides in the cell membrane. It catalyses the reaction 5-methyl-5,6,7,8-tetrahydromethanopterin + coenzyme M + 2 Na(+)(in) = 5,6,7,8-tetrahydromethanopterin + methyl-coenzyme M + 2 Na(+)(out). Its pathway is one-carbon metabolism; methanogenesis from CO(2); methyl-coenzyme M from 5,10-methylene-5,6,7,8-tetrahydromethanopterin: step 2/2. Its function is as follows. Part of a complex that catalyzes the formation of methyl-coenzyme M and tetrahydromethanopterin from coenzyme M and methyl-tetrahydromethanopterin. This is an energy-conserving, sodium-ion translocating step. This is Tetrahydromethanopterin S-methyltransferase subunit A from Methanosphaera stadtmanae (strain ATCC 43021 / DSM 3091 / JCM 11832 / MCB-3).